Here is an 861-residue protein sequence, read N- to C-terminus: Ataxin-7-like protein 1 (861 aa).

Disordered regions lie at residues 1-31, 154-189, 342-448, 606-673, and 772-861; these read MTSE…AMAT, GHHS…KGSR, KSRE…GADE, PIPA…LSGP, and FDKS…RTLP. The SCA7 domain occupies 284 to 351; that stretch reads RRLSEREFDP…KSREKEVKDK (68 aa). Positions 342 to 354 are enriched in basic and acidic residues; the sequence is KSREKEVKDKEHL. Positions 355 to 369 are enriched in polar residues; sequence LTSTREILPSQSGPA. 3 stretches are compositionally biased toward low complexity: residues 372–381, 403–417, and 606–616; these read SLLGSSGSSG, SSAN…SNHS, and PIPAVIPSPSH. The span at 617–627 shows a compositional bias: basic residues; the sequence is KPSKTKTSKSS. A compositionally biased stretch (basic and acidic residues) spans 628–641; it reads KVKDLSTRSDESPS. 2 stretches are compositionally biased toward low complexity: residues 648-671 and 783-794; these read QSST…SPLS and SSSSSKACKITK. The segment covering 817 to 828 has biased composition (polar residues); it reads VNSTSSRQVGKN. Positions 829 to 847 are enriched in low complexity; sequence SSLALSQSSPSSISSPGHS.

This chain is Ataxin-7-like protein 1 (ATXN7L1), found in Homo sapiens (Human).